The primary structure comprises 222 residues: Protein ORM1 (222 aa).

Positions 1-57 are disordered; the sequence is MTELDYQGTAEAASTSYSRNQTDLKPFPSAGSASSSIKTTEPVKDHRRRRSSSIISH. Residues 1-85 lie on the Cytoplasmic side of the membrane; that stretch reads MTELDYQGTA…NATWVDQRGA (85 aa). The segment covering 12 to 23 has biased composition (polar residues); the sequence is AASTSYSRNQTD. Phosphoserine occurs at positions 29, 32, and 56. A helical transmembrane segment spans residues 86 to 106; the sequence is WIIHVVIIILLKLFYNLFPGV. Topologically, residues 107–109 are extracellular; that stretch reads TTE. The helical transmembrane segment at 110 to 130 threads the bilayer; sequence WSWTLTNMTYVIGSYVMFHLI. Residues 131 to 162 are Cytoplasmic-facing; that stretch reads KGTPFDFNGGAYDNLTMWEQIDDETLYTPSRK. Residues 163-183 traverse the membrane as a helical segment; sequence FLISVPIALFLVSTHYAHYDL. Residue K184 is a topological domain, extracellular. The helical transmembrane segment at 185-205 threads the bilayer; that stretch reads LFSWNCFLTTFGAVVPKLPVT. Residues 206–222 lie on the Cytoplasmic side of the membrane; that stretch reads HRLRISIPGITGRAQIS.

It belongs to the ORM family. Component of the SPOTS complex, at least composed of LCB1/2 (LCB1 and/or LCB2), ORM1/2 (ORM1 and/or ORM2), SAC1 and TSC3. In terms of processing, phosphorylated in case of disruption of sphingolipid synthesis. Phosphorylation regulates inhibitory activity of serine palmitoyltransferases (LCB1 and LCB2).

It localises to the endoplasmic reticulum membrane. Component of the SPOTS complex that acts as a negative regulator of sphingolipid synthesis. Acts by inhibiting serine palmitoyltransferases (LCB1 and LCB2) activity. Along with ORM2, plays a role in the phosphorylation of LAC1 and YPK1, the distribution of actin patches between mother and daughter cells, and in endocytosis. Disruption or inhibition of sphingolipid synthesis leads to the activation and phosphorylation of YPK1 through the TORC2 and PKH1 pathways, which in turn phosphorylates ORM1 and LAG1 to activate sphingolipid synthesis. The chain is Protein ORM1 (ORM1) from Saccharomyces cerevisiae (strain ATCC 204508 / S288c) (Baker's yeast).